Consider the following 328-residue polypeptide: Probable membrane-associated kinase regulator 4 (328 aa).

Positions 213-253 (GQIKTERPKKQSNGSVSGSHRRSFSVSMRRQAAKSSNNKSS) are disordered. Residues 223–240 (QSNGSVSGSHRRSFSVSM) are compositionally biased toward polar residues.

The protein resides in the cell membrane. The sequence is that of Probable membrane-associated kinase regulator 4 (MAKR4) from Arabidopsis thaliana (Mouse-ear cress).